The sequence spans 317 residues: Acetyl-coenzyme A carboxylase carboxyl transferase subunit alpha (317 aa).

Residues 40 to 293 (LEKRSADALK…GDIITASLRS (254 aa)) enclose the CoA carboxyltransferase C-terminal domain.

Belongs to the AccA family. As to quaternary structure, acetyl-CoA carboxylase is a heterohexamer composed of biotin carboxyl carrier protein (AccB), biotin carboxylase (AccC) and two subunits each of ACCase subunit alpha (AccA) and ACCase subunit beta (AccD).

It localises to the cytoplasm. The catalysed reaction is N(6)-carboxybiotinyl-L-lysyl-[protein] + acetyl-CoA = N(6)-biotinyl-L-lysyl-[protein] + malonyl-CoA. It participates in lipid metabolism; malonyl-CoA biosynthesis; malonyl-CoA from acetyl-CoA: step 1/1. Functionally, component of the acetyl coenzyme A carboxylase (ACC) complex. First, biotin carboxylase catalyzes the carboxylation of biotin on its carrier protein (BCCP) and then the CO(2) group is transferred by the carboxyltransferase to acetyl-CoA to form malonyl-CoA. In Brucella anthropi (strain ATCC 49188 / DSM 6882 / CCUG 24695 / JCM 21032 / LMG 3331 / NBRC 15819 / NCTC 12168 / Alc 37) (Ochrobactrum anthropi), this protein is Acetyl-coenzyme A carboxylase carboxyl transferase subunit alpha.